Consider the following 679-residue polypeptide: UvrABC system protein B (679 aa).

Residues 25–412 (QGVNSGEEFQ…EGKFIEQVIR (388 aa)) enclose the Helicase ATP-binding domain. Residue 38-45 (GATGTGKT) coordinates ATP. Residues 91 to 114 (YYDYYQPEAYVPVSDTYIAKTASI) carry the Beta-hairpin motif. One can recognise a Helicase C-terminal domain in the interval 429–583 (QIDDLLSEIR…KKYNQINGIT (155 aa)). In terms of domain architecture, UVR spans 639–674 (PSLIDKLENKMKDAAKELNFEEAANLRDRIKKLRQK).

This sequence belongs to the UvrB family. In terms of assembly, forms a heterotetramer with UvrA during the search for lesions. Interacts with UvrC in an incision complex.

Its subcellular location is the cytoplasm. In terms of biological role, the UvrABC repair system catalyzes the recognition and processing of DNA lesions. A damage recognition complex composed of 2 UvrA and 2 UvrB subunits scans DNA for abnormalities. Upon binding of the UvrA(2)B(2) complex to a putative damaged site, the DNA wraps around one UvrB monomer. DNA wrap is dependent on ATP binding by UvrB and probably causes local melting of the DNA helix, facilitating insertion of UvrB beta-hairpin between the DNA strands. Then UvrB probes one DNA strand for the presence of a lesion. If a lesion is found the UvrA subunits dissociate and the UvrB-DNA preincision complex is formed. This complex is subsequently bound by UvrC and the second UvrB is released. If no lesion is found, the DNA wraps around the other UvrB subunit that will check the other stand for damage. The chain is UvrABC system protein B from Prochlorococcus marinus subsp. pastoris (strain CCMP1986 / NIES-2087 / MED4).